The chain runs to 603 residues: Matrix metalloproteinase-17 (603 aa).

The signal sequence occupies residues M1–G35. The propeptide occupies G36–R125. The Cysteine switch motif lies at P108–L115. A Zn(2+)-binding site is contributed by C110. N137 carries N-linked (GlcNAc...) asparagine glycosylation. Residue H248 coordinates Zn(2+). E249 is an active-site residue. 2 residues coordinate Zn(2+): H252 and H258. The disordered stretch occupies residues S301–P329. Residue N318 is glycosylated (N-linked (GlcNAc...) asparagine). C332 and C523 form a disulfide bridge. 4 Hemopexin repeats span residues S333–L378, L382–P427, P428–V475, and P476–C523. A disordered region spans residues D537 to P571. Residue S565 is the site of GPI-anchor amidated serine attachment. A propeptide spans G566–L603 (removed in mature form).

Belongs to the peptidase M10A family. Zn(2+) is required as a cofactor. Requires Ca(2+) as cofactor. The precursor is cleaved by a furin endopeptidase. Expressed in brain, leukocytes, colon, ovary testis and breast cancer. Expressed also in many transformed and non-transformed cell types.

The protein resides in the cell membrane. The protein localises to the secreted. It is found in the extracellular space. It localises to the extracellular matrix. Endopeptidase that degrades various components of the extracellular matrix, such as fibrin. May be involved in the activation of membrane-bound precursors of growth factors or inflammatory mediators, such as tumor necrosis factor-alpha. May also be involved in tumoral process. Cleaves pro-TNF-alpha at the '74-Ala-|-Gln-75' site. Not obvious if able to proteolytically activate progelatinase A. Does not hydrolyze collagen types I, II, III, IV and V, gelatin, fibronectin, laminin, decorin nor alpha1-antitrypsin. This Homo sapiens (Human) protein is Matrix metalloproteinase-17 (MMP17).